The primary structure comprises 851 residues: Protein BCK2 (851 aa).

Positions 1-10 are enriched in basic residues; the sequence is MPKNSHHHRS. Disordered stretches follow at residues 1–91, 233–271, 315–355, 466–504, and 698–722; these read MPKN…RKKS, EVVPKSTHDPSLAKPPSRFTESETNSTPNLSSIPLMNTK, SLSL…LPEE, FLDGQPQHKSGSVKGGHRKKQESISDAQRIQHSNSYITT, and HASRSESNNNTGNRVSYSGSTPNNV. The span at 11–23 shows a compositional bias: low complexity; it reads SSVNSTKSRSTES. Positions 37-66 are enriched in polar residues; sequence ASGSTQASPDRNSSTGSCSTPVLPTMNVMS. The segment covering 71 to 81 has biased composition (basic and acidic residues); sequence VLLEDPRDNHT. Composition is skewed to polar residues over residues 254–271, 334–349, 489–504, and 702–722; these read SETNSTPNLSSIPLMNTK, SPRTSRSFNCGDSQSK, ISDAQRIQHSNSYITT, and SESNNNTGNRVSYSGSTPNNV. Phosphoserine is present on S334. Residues S757 and S761 each carry the phosphoserine modification.

Functionally, dosage dependent suppressor of PKC1 deletion and MPK1 deletion. Involved in cell lysis. The protein is Protein BCK2 (BCK2) of Saccharomyces cerevisiae (strain ATCC 204508 / S288c) (Baker's yeast).